The sequence spans 787 residues: Transcriptional corepressor LEUNIG_HOMOLOG (787 aa).

A required for SEU-binding region spans residues 1 to 88 (MAQSNWEADK…IEAQQGKAKE (88 aa)). Positions 8–40 (ADKMLDVYIYDYLVKKKLHNTAKSFMTEGKVSP) constitute a LisH domain. Residues 77–106 (AYIEAQQGKAKEQQMQIQQLQMMRQAQMQR) adopt a coiled-coil conformation. The segment at 299–413 (NMTNSPMYGG…TPSTHTPVDG (115 aa)) is disordered. Composition is skewed to low complexity over residues 336–346 (SIGSPMQSSSS) and 355–372 (QQSS…QSQQ). Positions 380–409 (PSSSGPANSTGTGNTVGPSNSQPSTPSTHT) are enriched in polar residues. 7 WD repeats span residues 508–547 (KSAS…VEST), 550–589 (EHAH…YFLR), 593–633 (GHAA…VRAV), 635–671 (GAST…KRVN), 675–715 (GHSS…HELS), 717–755 (SGNK…CMTV), and 757–787 (GHEC…KIWK).

As to quaternary structure, forms corepressor complexes with SLK1 and SLK2; LUH is the transcription repressor subunit and SLK1 and SLK2 the specific DNA-binding adapters. Interacts with SEU. Binds to YAB3, YAB5 and YAB1/FIL; these complexes promote adaxial cell identity in leaves as well as embryonic shoot apical meristem (SAM) initiation and postembryonic SAM maintenance. Expressed in roots, stems, leaves, seedlings, apex, flowers, siliques, flower organs and seeds (including seed coat).

It is found in the nucleus. Functionally, transcription repressor subunit of the SEU-SLK1 and SEU-SLK2 transcriptional corepressor of abiotic stress (e.g. salt and osmotic stress) response genes, by means of an epigenetic process involving histone modification (e.g. H3K9 and H3K14 acetylation), probably by recruiting HDAC, to facilitate the condensation of chromatin thus preventing transcription at the target genes. Can also act as a transcription activator. Implicated in embryo and floral development. Involved in post-synthesis cell wall modifications necessary for mucilage extrusion from seeds upon imbibition, probably by promoting the expression of genes required for mucilage maturation (e.g. MUM2). Regulates the maintenance on leaf polarity and meristem activity as well as the initiation of embryonic shoot apical meristem (SAM) development. This Arabidopsis thaliana (Mouse-ear cress) protein is Transcriptional corepressor LEUNIG_HOMOLOG.